The sequence spans 1072 residues: Carbamoyl phosphate synthase large chain (1072 aa).

The tract at residues 1–401 (MPKRLDINTI…SLLKAVRSLE (401 aa)) is carboxyphosphate synthetic domain. Residues arginine 129, arginine 169, glycine 175, glycine 176, lysine 208, isoleucine 210, glutamate 215, glycine 241, valine 242, histidine 243, glutamine 284, and glutamate 298 each coordinate ATP. The region spanning 133 to 327 (RTLMQELNEP…IAKLAAKIAV (195 aa)) is the ATP-grasp 1 domain. Residues glutamine 284, glutamate 298, and asparagine 300 each contribute to the Mg(2+) site. Glutamine 284, glutamate 298, and asparagine 300 together coordinate Mn(2+). Positions 402–546 (LGIYHLELDH…YSTYADENEL (145 aa)) are oligomerization domain. The interval 547-929 (IVTDRKSVVV…ALYKGLVASG (383 aa)) is carbamoyl phosphate synthetic domain. The region spanning 671-861 (EAALTKLGIP…MANVATKVIL (191 aa)) is the ATP-grasp 2 domain. Residues arginine 707, arginine 746, glutamate 752, glycine 777, valine 778, histidine 779, serine 780, glutamine 820, and glutamate 832 each coordinate ATP. Residues glutamine 820, glutamate 832, and asparagine 834 each contribute to the Mg(2+) site. Positions 820, 832, and 834 each coordinate Mn(2+). Positions 930 to 1072 (INIPTHGSVI…QTKRHEVVHA (143 aa)) constitute an MGS-like domain. Positions 930-1072 (INIPTHGSVI…QTKRHEVVHA (143 aa)) are allosteric domain.

It belongs to the CarB family. Composed of two chains; the small (or glutamine) chain promotes the hydrolysis of glutamine to ammonia, which is used by the large (or ammonia) chain to synthesize carbamoyl phosphate. Tetramer of heterodimers (alpha,beta)4. Requires Mg(2+) as cofactor. The cofactor is Mn(2+).

The catalysed reaction is hydrogencarbonate + L-glutamine + 2 ATP + H2O = carbamoyl phosphate + L-glutamate + 2 ADP + phosphate + 2 H(+). The enzyme catalyses hydrogencarbonate + NH4(+) + 2 ATP = carbamoyl phosphate + 2 ADP + phosphate + 2 H(+). The protein operates within amino-acid biosynthesis; L-arginine biosynthesis; carbamoyl phosphate from bicarbonate: step 1/1. It functions in the pathway pyrimidine metabolism; UMP biosynthesis via de novo pathway; (S)-dihydroorotate from bicarbonate: step 1/3. Large subunit of the glutamine-dependent carbamoyl phosphate synthetase (CPSase). CPSase catalyzes the formation of carbamoyl phosphate from the ammonia moiety of glutamine, carbonate, and phosphate donated by ATP, constituting the first step of 2 biosynthetic pathways, one leading to arginine and/or urea and the other to pyrimidine nucleotides. The large subunit (synthetase) binds the substrates ammonia (free or transferred from glutamine from the small subunit), hydrogencarbonate and ATP and carries out an ATP-coupled ligase reaction, activating hydrogencarbonate by forming carboxy phosphate which reacts with ammonia to form carbamoyl phosphate. This chain is Carbamoyl phosphate synthase large chain, found in Bacillus anthracis (strain A0248).